The chain runs to 156 residues: Ribosomal RNA large subunit methyltransferase H (156 aa).

S-adenosyl-L-methionine-binding positions include leucine 72, glycine 104, and 123–128 (FGAMVW).

The protein belongs to the RNA methyltransferase RlmH family. In terms of assembly, homodimer.

Its subcellular location is the cytoplasm. The catalysed reaction is pseudouridine(1915) in 23S rRNA + S-adenosyl-L-methionine = N(3)-methylpseudouridine(1915) in 23S rRNA + S-adenosyl-L-homocysteine + H(+). Specifically methylates the pseudouridine at position 1915 (m3Psi1915) in 23S rRNA. This chain is Ribosomal RNA large subunit methyltransferase H, found in Ruegeria pomeroyi (strain ATCC 700808 / DSM 15171 / DSS-3) (Silicibacter pomeroyi).